The sequence spans 366 residues: Nodulation protein NolL (366 aa).

Helical transmembrane passes span 27 to 47 (FVKG…LVIY), 62 to 82 (IYMF…SGTI), 98 to 118 (LLIP…AAFF), 140 to 160 (FLWA…FNLL), 164 to 184 (ILCA…IVPL), 212 to 232 (HKSL…LDWG), 253 to 273 (VLLM…SLFH), 286 to 306 (LVAV…GAVF), and 324 to 344 (IVVA…VLWI).

It belongs to the acyltransferase 3 family.

It localises to the cell membrane. Functionally, thought to be an acetyltransferase that modifies the fucose of the nod factor. This chain is Nodulation protein NolL (nolL), found in Sinorhizobium fredii (strain NBRC 101917 / NGR234).